Reading from the N-terminus, the 376-residue chain is Protein RecA (376 aa).

Residue 66–73 (GPESSGKT) participates in ATP binding. Residues 329 to 376 (VGVKPEDLTAEPGADAAGAAADAEAPAKSVPAPAAKSAKGSKAAAAKS) form a disordered region. The span at 338-376 (AEPGADAAGAAADAEAPAKSVPAPAAKSAKGSKAAAAKS) shows a compositional bias: low complexity.

Belongs to the RecA family.

The protein resides in the cytoplasm. Functionally, can catalyze the hydrolysis of ATP in the presence of single-stranded DNA, the ATP-dependent uptake of single-stranded DNA by duplex DNA, and the ATP-dependent hybridization of homologous single-stranded DNAs. It interacts with LexA causing its activation and leading to its autocatalytic cleavage. The sequence is that of Protein RecA from Streptomyces rimosus.